Consider the following 557-residue polypeptide: Arginine--tRNA ligase (557 aa).

The 'HIGH' region motif lies at 132 to 142 (ANPTGDLHLGH).

This sequence belongs to the class-I aminoacyl-tRNA synthetase family. As to quaternary structure, monomer.

It localises to the cytoplasm. The catalysed reaction is tRNA(Arg) + L-arginine + ATP = L-arginyl-tRNA(Arg) + AMP + diphosphate. This Bacillus pumilus (strain SAFR-032) protein is Arginine--tRNA ligase.